The sequence spans 715 residues: Probable ubiquitin thioesterase DG1039 (715 aa).

Residues lysine 86–asparagine 302 adopt a coiled-coil conformation. The segment covering asparagine 287–asparagine 302 has biased composition (basic and acidic residues). Disordered regions lie at residues asparagine 287–threonine 367, glutamine 398–tyrosine 450, and leucine 502–alanine 527. A compositionally biased stretch (polar residues) spans threonine 339–glutamine 349. Positions glutamine 398–glutamine 409 are enriched in low complexity. Composition is skewed to polar residues over residues serine 410–asparagine 427 and leucine 502–serine 525. One can recognise an MPN domain in the interval isoleucine 537–leucine 666. Zn(2+) contacts are provided by histidine 615, histidine 617, aspartate 628, histidine 630, cysteine 672, histidine 678, and histidine 680. The short motif at histidine 615–aspartate 628 is the JAMM motif element.

This sequence belongs to the peptidase M67C family. It depends on Zn(2+) as a cofactor.

Its function is as follows. May be a zinc metalloprotease that specifically cleaves ubiquitin chains. The polypeptide is Probable ubiquitin thioesterase DG1039 (DG1039) (Dictyostelium discoideum (Social amoeba)).